A 341-amino-acid polypeptide reads, in one-letter code: NADH-quinone oxidoreductase subunit H (341 aa).

Transmembrane regions (helical) follow at residues 6–26 (LIVS…LMAY), 76–96 (LVFL…AAVI), 118–138 (VAVL…ILGG), 157–177 (VISY…LSGS), 198–218 (LPNW…IAAV), 252–272 (FLAE…LFLG), 278–298 (FADG…FYVW), and 313–333 (GLAW…TGLV).

The protein belongs to the complex I subunit 1 family. As to quaternary structure, NDH-1 is composed of 14 different subunits. Subunits NuoA, H, J, K, L, M, N constitute the membrane sector of the complex.

It localises to the cell membrane. The catalysed reaction is a quinone + NADH + 5 H(+)(in) = a quinol + NAD(+) + 4 H(+)(out). Functionally, NDH-1 shuttles electrons from NADH, via FMN and iron-sulfur (Fe-S) centers, to quinones in the respiratory chain. The immediate electron acceptor for the enzyme in this species is believed to be ubiquinone. Couples the redox reaction to proton translocation (for every two electrons transferred, four hydrogen ions are translocated across the cytoplasmic membrane), and thus conserves the redox energy in a proton gradient. This subunit may bind ubiquinone. The sequence is that of NADH-quinone oxidoreductase subunit H from Thermomicrobium roseum (strain ATCC 27502 / DSM 5159 / P-2).